Consider the following 725-residue polypeptide: MREEDIRSTAGHGTSNKDWWPNQLNLRILHQHSEKANPMGPDFNYREEFKKLDYWALKEDLRKLMTESQDWWPADFGHYGPLIIRMAWHSAGTYRIQDGRGGAESGAQRFAPLNSWPDNINLDKARRLLWPIKQKYGRRISWADLMILAGNVALESMGLKTIGFAGGRADVWEPEEDIYWGSEQQWLGRDRFGEEGKLEDPLAASEMGLIYVNPEGPGREPDPLKAAQQIRETFKRMGMNDEETVALIAGGHTFGKTHGAASPSHLGPEPEAAPIEEMGLGWKNSYGTGKGGDTITSGLEVTWTSSPTKWTSNFLWNLFGYEWELTKSPAGAWQWRPKNGAGEGTVPDAHDPNKRHAPGMLTTDIALRVDPVYEKIARRFLENPDEFAKAFARAWFKLTHRDLGPRSRYLGPEVPEEEFIWQDPLPKRDYDLIDEGDIAELKKRIQASGMSIREMVMTAWASASTFRGSDKRGGANGARIRLAPQIGWEVNEPEQLRPVLETLEGIQQEFNRSQTGRKRVSLADLIVLAGCVGIEQAARNAGFEITVPFTPGRVDATQEQTDVESFSYLEPVHDGFRNYLKRKFSVPAEHLLIDRANLLTLTAPEMTVLIGGLRVLDCNWGRTKHGVLTDRPGALTNDFFVNLLDMRWKWNATDDENVFEGRDRATGELKWTATRVDLIFGSNAQLRAIAEVYASNDGQEKFVQDFVKAWTKVMNLDRFDLLVKK.

Positions 88 to 211 form a cross-link, tryptophyl-tyrosyl-methioninium (Trp-Tyr) (with M-237); that stretch reads WHSAGTYRIQ…LAASEMGLIY (124 aa). H89 acts as the Proton acceptor in catalysis. The segment at residues 211–237 is a cross-link (tryptophyl-tyrosyl-methioninium (Tyr-Met) (with W-88)); that stretch reads YVNPEGPGREPDPLKAAQQIRETFKRM. Residue H252 participates in heme b binding.

It belongs to the peroxidase family. Peroxidase/catalase subfamily. In terms of assembly, homodimer or homotetramer. It depends on heme b as a cofactor. Post-translationally, formation of the three residue Trp-Tyr-Met cross-link is important for the catalase, but not the peroxidase activity of the enzyme.

The enzyme catalyses H2O2 + AH2 = A + 2 H2O. It carries out the reaction 2 H2O2 = O2 + 2 H2O. Functionally, bifunctional enzyme with both catalase and broad-spectrum peroxidase activity. The sequence is that of Catalase-peroxidase from Symbiobacterium thermophilum (strain DSM 24528 / JCM 14929 / IAM 14863 / T).